Consider the following 231-residue polypeptide: Sugar fermentation stimulation protein homolog (231 aa).

It belongs to the SfsA family.

The chain is Sugar fermentation stimulation protein homolog from Geotalea uraniireducens (strain Rf4) (Geobacter uraniireducens).